A 124-amino-acid polypeptide reads, in one-letter code: Small ribosomal subunit protein uS12 (124 aa).

Asp-89 is modified (3-methylthioaspartic acid). The disordered stretch occupies residues 105 to 124 (AGVKDRRQSRSKYGAKRPKA). The span at 113 to 124 (SRSKYGAKRPKA) shows a compositional bias: basic residues.

This sequence belongs to the universal ribosomal protein uS12 family. As to quaternary structure, part of the 30S ribosomal subunit. Contacts proteins S8 and S17. May interact with IF1 in the 30S initiation complex.

Its function is as follows. With S4 and S5 plays an important role in translational accuracy. In terms of biological role, interacts with and stabilizes bases of the 16S rRNA that are involved in tRNA selection in the A site and with the mRNA backbone. Located at the interface of the 30S and 50S subunits, it traverses the body of the 30S subunit contacting proteins on the other side and probably holding the rRNA structure together. The combined cluster of proteins S8, S12 and S17 appears to hold together the shoulder and platform of the 30S subunit. The sequence is that of Small ribosomal subunit protein uS12 (rpsL) from Synechococcus elongatus (strain ATCC 33912 / PCC 7942 / FACHB-805) (Anacystis nidulans R2).